Here is an 84-residue protein sequence, read N- to C-terminus: uncharacterized protein (84 aa).

A helical transmembrane segment spans residues 7–23; the sequence is AFSGVIALYGGYLYLRL.

Its subcellular location is the membrane. This is an uncharacterized protein from Haemophilus influenzae (strain ATCC 51907 / DSM 11121 / KW20 / Rd).